A 287-amino-acid chain; its full sequence is MAIAFQDVNTTSLGAITSDLNKAARPTVLVFDSGVGGLSIYQEIRQLLPDLHYIYVFDNEAFPYGEKSEEFIVERVVQIVGAIQQKHPLTIVVIACNTASTVSLPALRERFSFPVVGVVPAIKPAAKLTRNGVVGLLATRATVNRSYTKELIEKFATGCRIESIGSAELVELAEIKLHGGKVSPDILKKILKPWLGMKKPPDTVVLGCTHFPLLAEELVQILPDGTRLIDSGVAIARRTAWLVKHQNNLVCTSADSLAYCMKVNTDTDALIPVLQEYGFSKLEKLIT.

Residues 32 to 33 and 64 to 65 contribute to the substrate site; these read DS and YG. Residue C96 is the Proton donor/acceptor of the active site. Residue 97-98 coordinates substrate; that stretch reads NT. C208 serves as the catalytic Proton donor/acceptor. 209–210 is a binding site for substrate; the sequence is TH.

Belongs to the aspartate/glutamate racemases family.

The catalysed reaction is L-glutamate = D-glutamate. It functions in the pathway cell wall biogenesis; peptidoglycan biosynthesis. Its function is as follows. Provides the (R)-glutamate required for cell wall biosynthesis. The protein is Glutamate racemase of Photorhabdus laumondii subsp. laumondii (strain DSM 15139 / CIP 105565 / TT01) (Photorhabdus luminescens subsp. laumondii).